We begin with the raw amino-acid sequence, 400 residues long: MQELGKVESNSIRVTRQDDKRITIEKDLDTEHMVLSMGPQHPSTHGVLRLECITDGEVIVEAEPYLGYLHRCFEKHCENVDYPGIVPYTDRMDYLAGMNSELAYCLTVEKLLDIEIPRRVEFIRVITSELNRIASHLVAIGTYAIDLGAFTPFLFCFRDREHIMNLLEWISGARMLYNYIWIGGLAYDVPADFKKRVAEFVTYFRPKAVELYKLLTENEIFVKRTKGIGIMPADVAINFAWSGPMLRGSGVKWDLRRNDPYSVYPELDFEVPVPDGKFSDVGDCLSRHLVRALEMEESLKIIEQCLDKMPEEQGFDPRALIPKKIRPKAGEVYGRAENPRGELGYYIVSDGKSTKPVRCKARSSCFVNLAAMKDLSKGQLLPDLVAIIGSIDIVLGEVDR.

Belongs to the complex I 49 kDa subunit family. NDH-1 is composed of 14 different subunits. Subunits NuoB, C, D, E, F, and G constitute the peripheral sector of the complex.

It localises to the cell inner membrane. It carries out the reaction a quinone + NADH + 5 H(+)(in) = a quinol + NAD(+) + 4 H(+)(out). In terms of biological role, NDH-1 shuttles electrons from NADH, via FMN and iron-sulfur (Fe-S) centers, to quinones in the respiratory chain. The immediate electron acceptor for the enzyme in this species is believed to be a menaquinone. Couples the redox reaction to proton translocation (for every two electrons transferred, four hydrogen ions are translocated across the cytoplasmic membrane), and thus conserves the redox energy in a proton gradient. The protein is NADH-quinone oxidoreductase subunit D of Chlorobaculum parvum (strain DSM 263 / NCIMB 8327) (Chlorobium vibrioforme subsp. thiosulfatophilum).